The chain runs to 149 residues: Large ribosomal subunit protein bL9 (149 aa).

The protein belongs to the bacterial ribosomal protein bL9 family.

Binds to the 23S rRNA. The chain is Large ribosomal subunit protein bL9 from Fusobacterium nucleatum subsp. nucleatum (strain ATCC 25586 / DSM 15643 / BCRC 10681 / CIP 101130 / JCM 8532 / KCTC 2640 / LMG 13131 / VPI 4355).